Reading from the N-terminus, the 354-residue chain is UDP-N-acetylglucosamine--N-acetylmuramyl-(pentapeptide) pyrophosphoryl-undecaprenol N-acetylglucosamine transferase (354 aa).

UDP-N-acetyl-alpha-D-glucosamine-binding positions include 15-17, N127, R163, S191, I244, 263-268, and Q288; these read TGG and ALTVSE.

The protein belongs to the glycosyltransferase 28 family. MurG subfamily.

Its subcellular location is the cell inner membrane. It carries out the reaction di-trans,octa-cis-undecaprenyl diphospho-N-acetyl-alpha-D-muramoyl-L-alanyl-D-glutamyl-meso-2,6-diaminopimeloyl-D-alanyl-D-alanine + UDP-N-acetyl-alpha-D-glucosamine = di-trans,octa-cis-undecaprenyl diphospho-[N-acetyl-alpha-D-glucosaminyl-(1-&gt;4)]-N-acetyl-alpha-D-muramoyl-L-alanyl-D-glutamyl-meso-2,6-diaminopimeloyl-D-alanyl-D-alanine + UDP + H(+). The protein operates within cell wall biogenesis; peptidoglycan biosynthesis. Its function is as follows. Cell wall formation. Catalyzes the transfer of a GlcNAc subunit on undecaprenyl-pyrophosphoryl-MurNAc-pentapeptide (lipid intermediate I) to form undecaprenyl-pyrophosphoryl-MurNAc-(pentapeptide)GlcNAc (lipid intermediate II). The sequence is that of UDP-N-acetylglucosamine--N-acetylmuramyl-(pentapeptide) pyrophosphoryl-undecaprenol N-acetylglucosamine transferase from Serratia proteamaculans (strain 568).